The sequence spans 165 residues: Small ribosomal subunit protein uS5 (165 aa).

An S5 DRBM domain is found at 10 to 73 (LVEKLVSVDR…EAAKRNMITV (64 aa)).

Belongs to the universal ribosomal protein uS5 family. In terms of assembly, part of the 30S ribosomal subunit. Contacts proteins S4 and S8.

Its function is as follows. With S4 and S12 plays an important role in translational accuracy. Functionally, located at the back of the 30S subunit body where it stabilizes the conformation of the head with respect to the body. This Psychrobacter sp. (strain PRwf-1) protein is Small ribosomal subunit protein uS5.